We begin with the raw amino-acid sequence, 340 residues long: SH2 domain-containing adapter protein D (340 aa).

Disordered stretches follow at residues 1–77 (MAKW…PKHR), 94–186 (GGPG…QPWE), and 198–230 (VQFD…ERVD). The segment covering 98-108 (EELEADTEYLD) has biased composition (acidic residues). The segment covering 171 to 186 (PQEDERPADEYDQPWE) has biased composition (basic and acidic residues). Residues 240–335 (WFHGPLNRAD…AEHLALLYPV (96 aa)) enclose the SH2 domain.

Tyrosine phosphorylated by ABL.

Functionally, may function as an adapter protein. In Homo sapiens (Human), this protein is SH2 domain-containing adapter protein D (SHD).